A 152-amino-acid polypeptide reads, in one-letter code: UPF0178 protein Plav_1521 (152 aa).

A disordered region spans residues 114–152 (LRETGQSKGGGPAFSKEDRSRFLRSLEDTVQAIRRRPPP). Basic and acidic residues predominate over residues 128 to 140 (SKEDRSRFLRSLE).

The protein belongs to the UPF0178 family.

The polypeptide is UPF0178 protein Plav_1521 (Parvibaculum lavamentivorans (strain DS-1 / DSM 13023 / NCIMB 13966)).